The primary structure comprises 67 residues: WPPVEGRPSCKRCGACTRMWPPEANRCVCDDIVPQCHEGCSKCEKVDTRSGKPLYQCQSFEYYNCAA.

Intrachain disulfides connect Cys10–Cys29, Cys16–Cys27, Cys36–Cys43, and Cys40–Cys57.

The protein belongs to the Bowman-Birk serine protease inhibitor family. In terms of tissue distribution, expressed in bulb (at protein level).

In terms of biological role, serine protease inhibitor. Inhibits trypsin (Ki=12nM) and weakly inhibits chymotrypsin with (Ki=460nm). Does not inhibit bacterial subtilisin. This is Bowman-Birk type proteinase inhibitor A4 from Hyacinthus orientalis (Common hyacinth).